Reading from the N-terminus, the 448-residue chain is MDVRRPIREAVNNRRKPKFLSVSFNQDDSCFSVALENGFRIFNTDPLTSKLSKTFKESATNQSRGTGIGYTRMLYRTNYIALVGGGKRPRHALNKLIIWDDLLQKETITLKFMSSIKDVFLSRIHIVVVLENTIEIFQFQTNPQRICPILDIPPNGSVDYVVCSSKHLQSQASQSQSKILEIIAFPSNKCVGQIQVADLSQIKYNSQNPKESALLPTSIIKAHKNPIKLVRLNRQGTMVATCSVQGTLIRIFSTHNGTLIKEFRRGVDKADIYEMSFSPNGSKLAVLSNKQTLHIFQIFETTNTETNTPDHSRANGSSHPLKNYIPKGLWRPKYLDSVWSICNAHLKNPIFDAHRNDNSGDVTHDNEFYKDRCRIGWCQDSNNREQDDSLVLVWQNSGIWEKFVILEKEQQDSSKTHYSLNESLRNEDTKSAGEPTRWELVRESWREL.

6 N-linked (GlcNAc...) asparagine glycosylation sites follow: N61, N155, N256, N280, N315, and N421. WD repeat units lie at residues A222–E262 and V267–T306. A disordered region spans residues T416 to P435. The span at L424–P435 shows a compositional bias: basic and acidic residues.

This sequence belongs to the WD repeat PROPPIN family. N-glycosylated.

Its subcellular location is the endosome membrane. It localises to the prevacuolar compartment membrane. In terms of biological role, involved in piecemeal microautophagy of the nucleus (micronucleophagy). The polypeptide is SVP1-like protein 2 (HSV2) (Saccharomyces cerevisiae (strain ATCC 204508 / S288c) (Baker's yeast)).